The sequence spans 185 residues: Large ribosomal subunit protein uL6 (185 aa).

This sequence belongs to the universal ribosomal protein uL6 family. Part of the 50S ribosomal subunit.

In terms of biological role, this protein binds to the 23S rRNA, and is important in its secondary structure. It is located near the subunit interface in the base of the L7/L12 stalk, and near the tRNA binding site of the peptidyltransferase center. The chain is Large ribosomal subunit protein uL6 from Staphylothermus marinus (strain ATCC 43588 / DSM 3639 / JCM 9404 / F1).